The chain runs to 334 residues: Ketol-acid reductoisomerase (NADP(+)) (334 aa).

Positions alanine 3–threonine 183 constitute a KARI N-terminal Rossmann domain. NADP(+) contacts are provided by residues tyrosine 26 to glutamine 29, arginine 49, serine 52, and aspartate 84 to glutamine 87. Residue histidine 109 is part of the active site. Glycine 135 is a binding site for NADP(+). The KARI C-terminal knotted domain maps to threonine 184–isoleucine 329. Aspartate 192, glutamate 196, glutamate 228, and glutamate 232 together coordinate Mg(2+). Serine 253 serves as a coordination point for substrate.

Belongs to the ketol-acid reductoisomerase family. Requires Mg(2+) as cofactor.

The catalysed reaction is (2R)-2,3-dihydroxy-3-methylbutanoate + NADP(+) = (2S)-2-acetolactate + NADPH + H(+). It carries out the reaction (2R,3R)-2,3-dihydroxy-3-methylpentanoate + NADP(+) = (S)-2-ethyl-2-hydroxy-3-oxobutanoate + NADPH + H(+). It participates in amino-acid biosynthesis; L-isoleucine biosynthesis; L-isoleucine from 2-oxobutanoate: step 2/4. It functions in the pathway amino-acid biosynthesis; L-valine biosynthesis; L-valine from pyruvate: step 2/4. In terms of biological role, involved in the biosynthesis of branched-chain amino acids (BCAA). Catalyzes an alkyl-migration followed by a ketol-acid reduction of (S)-2-acetolactate (S2AL) to yield (R)-2,3-dihydroxy-isovalerate. In the isomerase reaction, S2AL is rearranged via a Mg-dependent methyl migration to produce 3-hydroxy-3-methyl-2-ketobutyrate (HMKB). In the reductase reaction, this 2-ketoacid undergoes a metal-dependent reduction by NADPH to yield (R)-2,3-dihydroxy-isovalerate. The protein is Ketol-acid reductoisomerase (NADP(+)) of Rhodopirellula baltica (strain DSM 10527 / NCIMB 13988 / SH1).